Here is a 118-residue protein sequence, read N- to C-terminus: MRSAKLKFEKRRSRIRHKISKTSHSVRLSIFKSGRHIYAQIIDDSKSITIAAASTLDEKIKKLKKSHCNIENAIKVGEEIAKKADSAGIQDVVFDRGGYKYHGVVKALADAAREKIKF.

Belongs to the universal ribosomal protein uL18 family. In terms of assembly, part of the 50S ribosomal subunit; part of the 5S rRNA/L5/L18/L25 subcomplex. Contacts the 5S and 23S rRNAs.

Its function is as follows. This is one of the proteins that bind and probably mediate the attachment of the 5S RNA into the large ribosomal subunit, where it forms part of the central protuberance. The chain is Large ribosomal subunit protein uL18 from Rickettsia peacockii (strain Rustic).